A 447-amino-acid polypeptide reads, in one-letter code: Glucose-6-phosphate isomerase (447 aa).

The Proton donor role is filled by E287. Active-site residues include H308 and K422.

It belongs to the GPI family.

Its subcellular location is the cytoplasm. It carries out the reaction alpha-D-glucose 6-phosphate = beta-D-fructose 6-phosphate. Its pathway is carbohydrate biosynthesis; gluconeogenesis. The protein operates within carbohydrate degradation; glycolysis; D-glyceraldehyde 3-phosphate and glycerone phosphate from D-glucose: step 2/4. In terms of biological role, catalyzes the reversible isomerization of glucose-6-phosphate to fructose-6-phosphate. The polypeptide is Glucose-6-phosphate isomerase (Heliobacterium modesticaldum (strain ATCC 51547 / Ice1)).